The following is a 249-amino-acid chain: Metallo-beta-lactamase type 2 (249 aa).

The first 22 residues, 1–22, serve as a signal peptide directing secretion; the sequence is MLKKIKISLILALGLTSLQAFG. Zn(2+) is bound by residues His98, His100, Asp102, His161, and Cys180. Residue Lys183 coordinates substrate. His222 contributes to the Zn(2+) binding site.

This sequence belongs to the metallo-beta-lactamase superfamily. Class-B beta-lactamase family. As to quaternary structure, monomer. It depends on Zn(2+) as a cofactor.

The protein resides in the periplasm. The enzyme catalyses a beta-lactam + H2O = a substituted beta-amino acid. Confers resistance to the different beta-lactams antibiotics (penicillin, cephalosporin and carbapenem) via the hydrolysis of the beta-lactam ring. The polypeptide is Metallo-beta-lactamase type 2 (blaB2) (Elizabethkingia meningoseptica (Chryseobacterium meningosepticum)).